A 396-amino-acid polypeptide reads, in one-letter code: MAEKEHYERTKPHVNIGTIGHVDHGKTTLTAAITKVLSEKGLAQAQDYASIDAAPEERERGITINTAHVEYETDKRHYAHIDAPGHADYVKNMITGAAQMDGAILVVAATDGPMPQTREHILLARQVGVNYIVVFLNKTDLVDDPELIDLVEMEVRELLSEYDFPGDDIPIIRGSALKALQGDPEQEKVILHLMDVIDEYIPTPVRDVDKPFLMPVEDVFTITGRGTVASGRIDRGTVKINDPVEIVGLKDEVKNTVVTGVEMFRKTLDLGEAGDNIGALLRGIDRDGVERGQVLAKPGSIQTHKKFKGEVYILTKEEGGRHTPFFTNYRPQFYFHTTDVTGVVELPEGVEMVMPGDHVTFTVELMKPVAIEKGLKFTIREGGHTVGAGTVSEIDD.

Positions 11–205 (KPHVNIGTIG…VIDEYIPTPV (195 aa)) constitute a tr-type G domain. A G1 region spans residues 20–27 (GHVDHGKT). 20-27 (GHVDHGKT) is a binding site for GTP. Mg(2+) is bound at residue threonine 27. Residues 61–65 (GITIN) are G2. Positions 82 to 85 (DAPG) are G3. Residues 82 to 86 (DAPGH) and 137 to 140 (NKTD) contribute to the GTP site. Residues 137–140 (NKTD) form a G4 region. The G5 stretch occupies residues 175–177 (SAL).

Belongs to the TRAFAC class translation factor GTPase superfamily. Classic translation factor GTPase family. EF-Tu/EF-1A subfamily. In terms of assembly, monomer.

It is found in the cytoplasm. The catalysed reaction is GTP + H2O = GDP + phosphate + H(+). Functionally, GTP hydrolase that promotes the GTP-dependent binding of aminoacyl-tRNA to the A-site of ribosomes during protein biosynthesis. In Oenococcus oeni (strain ATCC BAA-331 / PSU-1), this protein is Elongation factor Tu.